The following is a 217-amino-acid chain: Large ribosomal subunit protein uL3 (217 aa).

Belongs to the universal ribosomal protein uL3 family. In terms of assembly, part of the 50S ribosomal subunit. Forms a cluster with proteins L14 and L19.

Its function is as follows. One of the primary rRNA binding proteins, it binds directly near the 3'-end of the 23S rRNA, where it nucleates assembly of the 50S subunit. The protein is Large ribosomal subunit protein uL3 of Mycolicibacterium smegmatis (strain ATCC 700084 / mc(2)155) (Mycobacterium smegmatis).